The sequence spans 171 residues: Co-chaperone protein HscB homolog (171 aa).

The J domain maps to 2–74 (NHFELFGLPN…VSRAEYILSE (73 aa)).

It belongs to the HscB family. Interacts with HscA and stimulates its ATPase activity.

In terms of biological role, co-chaperone involved in the maturation of iron-sulfur cluster-containing proteins. Seems to help targeting proteins to be folded toward HscA. In Aliivibrio fischeri (strain ATCC 700601 / ES114) (Vibrio fischeri), this protein is Co-chaperone protein HscB homolog.